The following is a 954-amino-acid chain: MEEEEGAVAKEWGTTPAGPVWTAVFDYEAAGDEELTLRRGDRVQVLSQDCAVSGDEGWWTGQLPSGRVGVFPSNYVAPGAPAAPAGLQLPQEIPFHELQLEEIIGVGGFGKVYRALWRGEEVAVKAARLDPEKDPAVTAEQVCQEARLFGALQHPNIIALRGACLNPPHLCLVMEYARGGALSRVLAGRRVPPHVLVNWAVQVARGMNYLHNDAPVPIIHRDLKSINILILEAIENHNLADTVLKITDFGLAREWHKTTKMSAAGTYAWMAPEVIRLSLFSKSSDVWSFGVLLWELLTGEVPYREIDALAVAYGVAMNKLTLPIPSTCPEPFARLLEECWDPDPHGRPDFGSILKRLEVIEQSALFQMPLESFHSLQEDWKLEIQHMFDDLRTKEKELRSREEELLRAAQEQRFQEEQLRRREQELAEREMDIVERELHLLMCQLSQEKPRVRKRKGNFKRSRLLKLREGGSHISLPSGFEHKITVQASPTLDKRKGSDGASPPASPSIIPRLRAIRLTPVDCGGSSSGSSSGGSGTWSRGGPPKKEELVGGKKKGRTWGPSSTLQKERVGGEERLKGLGEGSKQWSSSAPNLGKSPKHTPIAPGFASLNEMEEFAEAEDGGSSVPPSPYSTPSYLSVPLPAEPSPGARAPWEPTPSAPPARWGHGARRRCDLALLGCATLLGAVGLGADVAEARAADGEEQRRWLDGLFFPRAGRFPRGLSPPARPHGRREDVGPGLGLAPSATLVSLSSVSDCNSTRSLLRSDSDEAAPAAPSPPPSPPAPTPTPSPSTNPLVDLELESFKKDPRQSLTPTHVTAACAVSRGHRRTPSDGALGQRGPPEPAGHGPGPRDLLDFPRLPDPQALFPARRRPPEFPGRPTTLTFAPRPRPAASRPRLDPWKLVSFGRTLTISPPSRPDTPESPGPPSVQPTLLDMDMEGQNQDSTVPLCGAHGSH.

One can recognise an SH3 domain in the interval 16–81 (PAGPVWTAVF…PSNYVAPGAP (66 aa)). The Protein kinase domain occupies 98–360 (LQLEEIIGVG…GSILKRLEVI (263 aa)). Residues 104–112 (IGVGGFGKV) and K125 contribute to the ATP site. Catalysis depends on D222, which acts as the Proton acceptor. T258 is subject to Phosphothreonine; by autocatalysis. S262 is subject to Phosphoserine; by autocatalysis and MAP4K1. 2 leucine-zipper regions span residues 384–405 (IQHMFDDLRTKEKELRSREEEL) and 419–440 (LRRREQELAEREMDIVERELHL). 3 disordered regions span residues 490–665 (PTLD…RWGH), 716–739 (RFPRGLSPPARPHGRREDVGPGLG), and 757–954 (STRS…HGSH). 3 positions are modified to phosphoserine: S498, S502, and S506. The span at 501 to 511 (ASPPASPSIIP) shows a compositional bias: low complexity. Residue T558 is modified to Phosphothreonine. Residues 566–578 (QKERVGGEERLKG) show a composition bias toward basic and acidic residues. Residues 611 to 620 (EMEEFAEAED) show a composition bias toward acidic residues. Over residues 631-640 (STPSYLSVPL) the composition is skewed to low complexity. The segment covering 773 to 790 (APSPPPSPPAPTPTPSPS) has biased composition (pro residues). R857 is subject to Omega-N-methylarginine. Residues 913–927 (PSRPDTPESPGPPSV) are compositionally biased toward pro residues.

The protein belongs to the protein kinase superfamily. STE Ser/Thr protein kinase family. MAP kinase kinase kinase subfamily. In terms of assembly, homodimer. Interacts with SH3RF2. Mg(2+) serves as cofactor. In terms of processing, autophosphorylation on serine and threonine residues within the activation loop plays a role in enzyme activation. In terms of tissue distribution, expressed in brain and skeletal muscle.

The catalysed reaction is L-seryl-[protein] + ATP = O-phospho-L-seryl-[protein] + ADP + H(+). It catalyses the reaction L-threonyl-[protein] + ATP = O-phospho-L-threonyl-[protein] + ADP + H(+). With respect to regulation, homodimerization via the leucine zipper domains is required for autophosphorylation and subsequent activation. In terms of biological role, activates the JUN N-terminal pathway. This chain is Mitogen-activated protein kinase kinase kinase 10 (MAP3K10), found in Homo sapiens (Human).